The sequence spans 406 residues: Probable endo-xylogalacturonan hydrolase A (406 aa).

An N-terminal signal peptide occupies residues methionine 1–alanine 18. 4 PbH1 repeats span residues alanine 183–serine 213, serine 214–proline 235, cysteine 237–serine 257, and valine 299–serine 320. Aspartate 228 serves as the catalytic Proton donor. Asparagine 244 carries an N-linked (GlcNAc...) asparagine glycan. Residue histidine 251 is part of the active site. Asparagine 301 carries N-linked (GlcNAc...) asparagine glycosylation.

This sequence belongs to the glycosyl hydrolase 28 family.

It localises to the secreted. Functionally, pectinolytic enzyme involved in the degradation of xylogalacturonan (xga), a galacturonan backbone heavily substituted with xylose, and which is one important component of the hairy regions of pectin. Activity requires a galacturonic acid backbone substituted with xylose. This is Probable endo-xylogalacturonan hydrolase A (xghA) from Neosartorya fischeri (strain ATCC 1020 / DSM 3700 / CBS 544.65 / FGSC A1164 / JCM 1740 / NRRL 181 / WB 181) (Aspergillus fischerianus).